We begin with the raw amino-acid sequence, 471 residues long: Proline--tRNA ligase (471 aa).

This sequence belongs to the class-II aminoacyl-tRNA synthetase family. ProS type 3 subfamily. In terms of assembly, homodimer.

It localises to the cytoplasm. The enzyme catalyses tRNA(Pro) + L-proline + ATP = L-prolyl-tRNA(Pro) + AMP + diphosphate. Catalyzes the attachment of proline to tRNA(Pro) in a two-step reaction: proline is first activated by ATP to form Pro-AMP and then transferred to the acceptor end of tRNA(Pro). This is Proline--tRNA ligase from Archaeoglobus fulgidus (strain ATCC 49558 / DSM 4304 / JCM 9628 / NBRC 100126 / VC-16).